The chain runs to 160 residues: Phosphopantetheine adenylyltransferase (160 aa).

Residue Thr9 participates in substrate binding. ATP-binding positions include 9–10 and His17; that span reads TF. Lys41, Leu73, and Arg87 together coordinate substrate. ATP contacts are provided by residues 88–90, Glu98, and 123–129; these read GLR and LSYISST.

It belongs to the bacterial CoaD family. As to quaternary structure, homohexamer. Requires Mg(2+) as cofactor.

It localises to the cytoplasm. It carries out the reaction (R)-4'-phosphopantetheine + ATP + H(+) = 3'-dephospho-CoA + diphosphate. It participates in cofactor biosynthesis; coenzyme A biosynthesis; CoA from (R)-pantothenate: step 4/5. In terms of biological role, reversibly transfers an adenylyl group from ATP to 4'-phosphopantetheine, yielding dephospho-CoA (dPCoA) and pyrophosphate. The polypeptide is Phosphopantetheine adenylyltransferase (Marinobacter nauticus (strain ATCC 700491 / DSM 11845 / VT8) (Marinobacter aquaeolei)).